The chain runs to 209 residues: Bcl-2 homologous antagonist/killer (209 aa).

A disordered region spans residues 1–28; sequence MASGQGPGPPKVGCDESPSPSEQQVAQD. N-acetylalanine is present on Ala2. Positions 18-27 are enriched in polar residues; the sequence is PSPSEQQVAQ. Positions 72–86 match the BH3 motif; it reads VGRQLALIGDDINRR. The short motif at 115 to 134 is the BH1 element; that stretch reads SLFKSGISWGRVVALLGFGY. Residues Asp158 and His162 each contribute to the Zn(2+) site. Positions 167-182 match the BH2 motif; that stretch reads RWIAQRGGWVAALNFR. A helical transmembrane segment spans residues 186 to 203; that stretch reads ILTVMVIFGVVLLGQFVV.

It belongs to the Bcl-2 family. As to quaternary structure, homodimer. Formation of the homodimer is zinc-dependent. Forms heterodimers with BCL2 and BCL2L1 isoform Bcl-X(L). Forms heterooligomers with BAX. Interacts with BCL2A1. Interacts withRTL10/BOP. Interacts with VDAC1. Interacts with GIMAP3/IAN4 and GIMAP5/IAN5. In terms of assembly, (Microbial infection) Interacts with gamma-herpesvirus 68 protein vBCL2. As to expression, widely expressed.

The protein resides in the mitochondrion outer membrane. Functionally, in the presence of an appropriate stimulus, accelerates programmed cell death by binding to, and antagonizing the anti-apoptotic action of BCL2. This is Bcl-2 homologous antagonist/killer (Bak1) from Mus musculus (Mouse).